The primary structure comprises 470 residues: Siroheme synthase 2 (470 aa).

Residues 1-202 are precorrin-2 dehydrogenase /sirohydrochlorin ferrochelatase; that stretch reads MDYLPMFAKL…EDWQGAEQWL (202 aa). Residues 22–23 and 43–44 contribute to the NAD(+) site; these read EV and PE. Ser-126 is subject to Phosphoserine. Residues 214–470 are uroporphyrinogen-III C-methyltransferase; that stretch reads GEVVLVGAGP…TCDLKLVSLA (257 aa). Pro-223 serves as a coordination point for S-adenosyl-L-methionine. The active-site Proton acceptor is the Asp-246. The active-site Proton donor is the Lys-268. Residues 299–301, 329–330, Met-381, and Gly-410 contribute to the S-adenosyl-L-methionine site; these read GGD and TA.

It in the N-terminal section; belongs to the precorrin-2 dehydrogenase / sirohydrochlorin ferrochelatase family. The protein in the C-terminal section; belongs to the precorrin methyltransferase family.

The enzyme catalyses uroporphyrinogen III + 2 S-adenosyl-L-methionine = precorrin-2 + 2 S-adenosyl-L-homocysteine + H(+). The catalysed reaction is precorrin-2 + NAD(+) = sirohydrochlorin + NADH + 2 H(+). It carries out the reaction siroheme + 2 H(+) = sirohydrochlorin + Fe(2+). The protein operates within cofactor biosynthesis; adenosylcobalamin biosynthesis; precorrin-2 from uroporphyrinogen III: step 1/1. It participates in cofactor biosynthesis; adenosylcobalamin biosynthesis; sirohydrochlorin from precorrin-2: step 1/1. Its pathway is porphyrin-containing compound metabolism; siroheme biosynthesis; precorrin-2 from uroporphyrinogen III: step 1/1. It functions in the pathway porphyrin-containing compound metabolism; siroheme biosynthesis; siroheme from sirohydrochlorin: step 1/1. The protein operates within porphyrin-containing compound metabolism; siroheme biosynthesis; sirohydrochlorin from precorrin-2: step 1/1. In terms of biological role, multifunctional enzyme that catalyzes the SAM-dependent methylations of uroporphyrinogen III at position C-2 and C-7 to form precorrin-2 via precorrin-1. Then it catalyzes the NAD-dependent ring dehydrogenation of precorrin-2 to yield sirohydrochlorin. Finally, it catalyzes the ferrochelation of sirohydrochlorin to yield siroheme. The chain is Siroheme synthase 2 from Aeromonas hydrophila subsp. hydrophila (strain ATCC 7966 / DSM 30187 / BCRC 13018 / CCUG 14551 / JCM 1027 / KCTC 2358 / NCIMB 9240 / NCTC 8049).